The following is a 796-amino-acid chain: DNA damage-responsive transcriptional repressor RPH1 (796 aa).

The JmjN domain occupies 14–55 (VPVFKPTYEQFEDFYAYCKAINKYGMKSGVVKVIPPKEWKDK). A JmjC domain is found at 193–355 (PEGLNVWNVA…IGKKAGKCHC (163 aa)). A Phosphothreonine modification is found at Thr399. Residues Ser430, Ser459, Ser557, Ser561, Ser575, and Ser584 each carry the phosphoserine modification. The short motif at 455–471 (KRISSFQEQPLNKLLKR) is the Bipartite nuclear localization signal element. The segment at 599-692 (RQQHSQQHSF…DKEQGSSPLN (94 aa)) is disordered. Residues 601-621 (QHSQQHSFSTPSTVSNLSTSV) are compositionally biased toward polar residues. The segment covering 629-640 (NDIKTPHPERPN) has biased composition (basic and acidic residues). Position 652 is a phosphoserine (Ser652). Over residues 654–669 (VETSKSNLILSKVAST) the composition is skewed to polar residues. The span at 670 to 686 (RQEDSFTSRNDDLDKEQ) shows a compositional bias: basic and acidic residues. The residue at position 689 (Ser689) is a Phosphoserine. The segment at 709 to 732 (YICKECQRKFSSGHHLTRHKKSVH) adopts a C2H2-type 1 zinc-finger fold. The C2H2-type 2; atypical zinc finger occupies 738 to 763 (HSCPKCGKRFKRRDHVLQHLNKKIPC). The segment at 774–796 (IMNPTVQPQDGKAAINQQSTPLN) is disordered.

In terms of processing, RAD53-dependent phosphorylated in response to DNA damage.

The protein resides in the nucleus. Its function is as follows. Transcriptional repressor of photolyase PHR1. Recognizes and binds the sequence AG(4) in the upstream repressing sequence of PHR1. Derepresses PHR1 transcription when phosphorylated. The sequence is that of DNA damage-responsive transcriptional repressor RPH1 (RPH1) from Saccharomyces cerevisiae (strain ATCC 204508 / S288c) (Baker's yeast).